The sequence spans 135 residues: Protein PsiE homolog (135 aa).

Helical transmembrane passes span 14–34, 54–74, 82–102, and 107–127; these read LQTI…IFLV, YQLI…ALIV, HFPL…LIIV, and PSDT…LYLA.

This sequence belongs to the PsiE family.

Its subcellular location is the cell inner membrane. This chain is Protein PsiE homolog, found in Pectobacterium atrosepticum (strain SCRI 1043 / ATCC BAA-672) (Erwinia carotovora subsp. atroseptica).